The following is a 45-amino-acid chain: MKPTFRPHRKKRARKIGYRARMATASGRKVIKSRRLKGRKRLTVV.

The protein belongs to the bacterial ribosomal protein bL34 family.

This Opitutus terrae (strain DSM 11246 / JCM 15787 / PB90-1) protein is Large ribosomal subunit protein bL34.